The following is a 40-amino-acid chain: Antimicrobial peptide 2 (40 aa).

The Chitin-binding type-1 domain occupies 1–40 (AQCGAQGGGATCPGGLCCSQWGWCGSTPKYCGAGCQSNCR). 4 cysteine pairs are disulfide-bonded: Cys3–Cys18, Cys12–Cys24, Cys17–Cys31, and Cys35–Cys39.

In terms of processing, not glycosylated.

Functionally, antimicrobial peptide active against plant pathogenic fungi and Gram-negative and -positive bacteria. The sequence is that of Antimicrobial peptide 2 from Fagopyrum esculentum (Common buckwheat).